Reading from the N-terminus, the 88-residue chain is Guanine nucleotide-binding protein subunit gamma (88 aa).

Residue Cys84 is the site of S-palmitoyl cysteine attachment. Cys85 carries the cysteine methyl ester modification. Cys85 is lipidated: S-farnesyl cysteine. A propeptide spans 86 to 88 (removed in mature form); it reads TIM.

This sequence belongs to the G protein gamma family. G proteins are composed of 3 units, alpha, beta and gamma.

The protein localises to the membrane. This is Guanine nucleotide-binding protein subunit gamma from Candida glabrata (strain ATCC 2001 / BCRC 20586 / JCM 3761 / NBRC 0622 / NRRL Y-65 / CBS 138) (Yeast).